Reading from the N-terminus, the 359-residue chain is DNA polymerase IV (359 aa).

The UmuC domain maps to 4-184; sequence IVHVDMDAFY…LKVNRIPGVG (181 aa). Residues D8 and D102 each contribute to the Mg(2+) site. E103 is a catalytic residue.

This sequence belongs to the DNA polymerase type-Y family. As to quaternary structure, monomer. Mg(2+) serves as cofactor.

It is found in the cytoplasm. It catalyses the reaction DNA(n) + a 2'-deoxyribonucleoside 5'-triphosphate = DNA(n+1) + diphosphate. Its function is as follows. Poorly processive, error-prone DNA polymerase involved in untargeted mutagenesis. Copies undamaged DNA at stalled replication forks, which arise in vivo from mismatched or misaligned primer ends. These misaligned primers can be extended by PolIV. Exhibits no 3'-5' exonuclease (proofreading) activity. May be involved in translesional synthesis, in conjunction with the beta clamp from PolIII. The polypeptide is DNA polymerase IV (Xanthomonas axonopodis pv. citri (strain 306)).